Here is a 101-residue protein sequence, read N- to C-terminus: Small ribosomal subunit protein uS14 (101 aa).

This sequence belongs to the universal ribosomal protein uS14 family. As to quaternary structure, part of the 30S ribosomal subunit. Contacts proteins S3 and S10.

Binds 16S rRNA, required for the assembly of 30S particles and may also be responsible for determining the conformation of the 16S rRNA at the A site. The protein is Small ribosomal subunit protein uS14 of Pseudomonas putida (strain W619).